A 178-amino-acid polypeptide reads, in one-letter code: Ribulose bisphosphate carboxylase small subunit, chloroplastic (178 aa).

The transit peptide at 1–54 directs the protein to the chloroplast; sequence MASISSSVATVSRTAPAQANMVAPFTGLKSNAAFPTTKKANDFSTLPSNGGRVQ.

Belongs to the RuBisCO small chain family. In terms of assembly, heterohexadecamer of 8 large and 8 small subunits.

It localises to the plastid. The protein localises to the chloroplast. In terms of biological role, ruBisCO catalyzes two reactions: the carboxylation of D-ribulose 1,5-bisphosphate, the primary event in carbon dioxide fixation, as well as the oxidative fragmentation of the pentose substrate. Both reactions occur simultaneously and in competition at the same active site. Although the small subunit is not catalytic it is essential for maximal activity. The protein is Ribulose bisphosphate carboxylase small subunit, chloroplastic of Helianthus annuus (Common sunflower).